Consider the following 245-residue polypeptide: Tetraspanin-6 (245 aa).

The Cytoplasmic portion of the chain corresponds to 1-19 (MASPSRRLQTKPVITCFKS). Residues 20 to 40 (VLLIYTFIFWITGVILLAVGI) form a helical membrane-spanning segment. At 41–59 (WGKVSLENYFSLLNEKATN) the chain is on the extracellular side. The helical transmembrane segment at 60 to 80 (VPFVLIGTGTVIILLGTFGCF) threads the bilayer. The Cytoplasmic segment spans residues 81–93 (ATCRASAWMLKLY). Residues 94–114 (AMFLTLIFLVELVAAIIGFVF) form a helical membrane-spanning segment. At 115–208 (RHEIKNSLKN…IMVMTIIESE (94 aa)) the chain is on the extracellular side. N134 is a glycosylation site (N-linked (GlcNAc...) asparagine). Residues 209 to 229 (MGVVAGISFGVACFQLIGIFL) traverse the membrane as a helical segment. Residues 230–245 (AYCLSRAITNNQYEIV) are Cytoplasmic-facing.

This sequence belongs to the tetraspanin (TM4SF) family.

The protein localises to the membrane. The chain is Tetraspanin-6 (TSPAN6) from Bos taurus (Bovine).